Reading from the N-terminus, the 63-residue chain is Prokaryotic ubiquitin-like protein Pup (63 aa).

Residues 1–28 (MPQEFEQIRSADQPLDSEESAPVAGART) are disordered. The ARC ATPase binding stretch occupies residues 19–57 (ESAPVAGARTDDTVDALDAVLDDIESVLETNAEEYVGSF). Residue glutamate 63 forms an Isoglutamyl lysine isopeptide (Glu-Lys) (interchain with K-? in acceptor proteins) linkage.

This sequence belongs to the prokaryotic ubiquitin-like protein family. In terms of assembly, strongly interacts with the proteasome-associated ATPase ARC through a hydrophobic interface; the interacting region of Pup lies in its C-terminal half. There is one Pup binding site per ARC hexamer ring.

It participates in protein degradation; proteasomal Pup-dependent pathway. Protein modifier that is covalently attached to lysine residues of substrate proteins, thereby targeting them for proteasomal degradation. The tagging system is termed pupylation. In Bifidobacterium dentium (strain ATCC 27534 / DSM 20436 / JCM 1195 / Bd1), this protein is Prokaryotic ubiquitin-like protein Pup.